Consider the following 91-residue polypeptide: Small ribosomal subunit protein uS15c (91 aa).

The protein belongs to the universal ribosomal protein uS15 family. As to quaternary structure, part of the 30S ribosomal subunit.

It is found in the plastid. The protein localises to the chloroplast. In Cicer arietinum (Chickpea), this protein is Small ribosomal subunit protein uS15c (rps15).